A 285-amino-acid polypeptide reads, in one-letter code: Protoheme IX farnesyltransferase (285 aa).

A run of 9 helical transmembrane segments spans residues 13 to 33 (LGKLGVVSLLDLAAVAGAFLA), 40 to 60 (LLPIIPMFIGGTLASMGAMII), 89 to 109 (EAIIVGSLLAILGTALGFIDN), 110 to 130 (ILTAFFIALGVVIYIFVYTIL), 137 to 157 (LNIVIGGFAGSAAAWAGYTSL), 165 to 185 (GFLLGFLIFMWTPGHFWSLAL), 194 to 214 (AHYPMLPAVVGITTSARAIAI), 218 to 238 (LMIPIVLLLGYYINLIALIAF), and 265 to 285 (FIFSNIYLMLILLIMIIVKLI).

Belongs to the UbiA prenyltransferase family. Protoheme IX farnesyltransferase subfamily.

Its subcellular location is the cell membrane. The enzyme catalyses heme b + (2E,6E)-farnesyl diphosphate + H2O = Fe(II)-heme o + diphosphate. Its pathway is porphyrin-containing compound metabolism; heme O biosynthesis; heme O from protoheme: step 1/1. Its function is as follows. Converts heme B (protoheme IX) to heme O by substitution of the vinyl group on carbon 2 of heme B porphyrin ring with a hydroxyethyl farnesyl side group. The polypeptide is Protoheme IX farnesyltransferase (Saccharolobus islandicus (strain Y.G.57.14 / Yellowstone #1) (Sulfolobus islandicus)).